A 328-amino-acid polypeptide reads, in one-letter code: Serine/threonine protein kinase RdoA (328 aa).

Aspartate 201 functions as the Proton acceptor in the catalytic mechanism. Residues asparagine 206 and aspartate 217 each coordinate Mg(2+). Residue aspartate 217 is part of the active site.

This sequence belongs to the SrkA/RdoA protein kinase family. Monomer. Mg(2+) serves as cofactor.

The protein resides in the cytoplasm. The enzyme catalyses L-seryl-[protein] + ATP = O-phospho-L-seryl-[protein] + ADP + H(+). It catalyses the reaction L-threonyl-[protein] + ATP = O-phospho-L-threonyl-[protein] + ADP + H(+). A protein kinase that (auto)phosphorylates on Ser and Thr residues, probably involved in the extracytoplasmic stress response. Probably acts to suppress the effects of stress linked to accumulation of reactive oxygen species. The sequence is that of Serine/threonine protein kinase RdoA from Salmonella typhimurium (strain LT2 / SGSC1412 / ATCC 700720).